The chain runs to 391 residues: 8-amino-7-oxononanoate synthase (391 aa).

Arg19 serves as a coordination point for substrate. 106-107 lines the pyridoxal 5'-phosphate pocket; the sequence is GY. His131 is a binding site for substrate. Pyridoxal 5'-phosphate-binding residues include Ser178, His206, and Thr234. Lys237 carries the N6-(pyridoxal phosphate)lysine modification. Thr353 is a binding site for substrate.

Belongs to the class-II pyridoxal-phosphate-dependent aminotransferase family. BioF subfamily. Homodimer. Requires pyridoxal 5'-phosphate as cofactor.

It carries out the reaction 6-carboxyhexanoyl-[ACP] + L-alanine + H(+) = (8S)-8-amino-7-oxononanoate + holo-[ACP] + CO2. The protein operates within cofactor biosynthesis; biotin biosynthesis. Its function is as follows. Catalyzes the decarboxylative condensation of pimeloyl-[acyl-carrier protein] and L-alanine to produce 8-amino-7-oxononanoate (AON), [acyl-carrier protein], and carbon dioxide. This chain is 8-amino-7-oxononanoate synthase, found in Geobacter sulfurreducens (strain ATCC 51573 / DSM 12127 / PCA).